Consider the following 334-residue polypeptide: L-lactate dehydrogenase B chain (334 aa).

Residue alanine 2 is modified to N-acetylalanine. N6-acetyllysine is present on lysine 7. NAD(+) is bound by residues glycine 30–lysine 58 and arginine 100. Position 44 is a phosphoserine (serine 44). N6-acetyllysine is present on lysine 58. Arginine 107 is a binding site for substrate. Position 119 is an N6-acetyllysine (lysine 119). Residue asparagine 139 coordinates NAD(+). The substrate site is built by asparagine 139 and arginine 170. The active-site Proton acceptor is histidine 194. Tyrosine 240 is subject to Phosphotyrosine. Substrate is bound at residue threonine 249. Lysine 329 bears the N6-acetyllysine mark.

Belongs to the LDH/MDH superfamily. LDH family. In terms of assembly, homotetramer. Interacts with PTEN upstream reading frame protein MP31; the interaction leads to inhibition of mitochondrial lactate dehydrogenase activity, preventing conversion of lactate to pyruvate in mitochondria.

Its subcellular location is the cytoplasm. The protein resides in the mitochondrion inner membrane. It catalyses the reaction (S)-lactate + NAD(+) = pyruvate + NADH + H(+). It participates in fermentation; pyruvate fermentation to lactate; (S)-lactate from pyruvate: step 1/1. Its function is as follows. Interconverts simultaneously and stereospecifically pyruvate and lactate with concomitant interconversion of NADH and NAD(+). The polypeptide is L-lactate dehydrogenase B chain (LDHB) (Sus scrofa (Pig)).